A 303-amino-acid chain; its full sequence is Uricase (303 aa).

Ala-2 is modified (N-acetylalanine). N6-acetyllysine; alternate occurs at positions 10 and 23. N6-succinyllysine; alternate occurs at positions 10 and 23. The active-site Charge relay system is the Lys-23. Lys-27 and Lys-36 each carry N6-acetyllysine. A phosphoserine mark is found at Ser-39 and Ser-63. Thr-68 (charge relay system) is an active-site residue. Urate-binding residues include Thr-68 and Asp-69. N6-acetyllysine occurs at positions 118, 122, and 164. Phe-170 lines the urate pocket. 2 positions are modified to N6-acetyllysine: Lys-175 and Lys-185. Arg-187 provides a ligand contact to urate. An N6-acetyllysine; alternate mark is found at Lys-220 and Lys-227. N6-succinyllysine; alternate occurs at positions 220 and 227. At Ser-231 the chain carries Phosphoserine. Urate-binding residues include Val-234, Gln-235, and Asn-261. His-263 serves as the catalytic Charge relay system. The residue at position 277 (Lys-277) is an N6-acetyllysine. Tyr-288 is modified (phosphotyrosine). Positions 301-303 (SRL) match the Microbody targeting signal motif.

Belongs to the uricase family. In terms of processing, acetylation of Lys-118, Lys-164 and Lys-290 is observed in liver mitochondria from fasted mice but not from fed mice. May be deacetylated by Sirt5; however it is unclear whether Sirt5 mediates deacetylation or desuccinylation of Uox; additional evidence is required to validate these results.

Its subcellular location is the peroxisome. It is found in the mitochondrion. It carries out the reaction urate + O2 + H2O = 5-hydroxyisourate + H2O2. The protein operates within purine metabolism; urate degradation; (S)-allantoin from urate: step 1/3. In terms of biological role, catalyzes the oxidation of uric acid to 5-hydroxyisourate, which is further processed to form (S)-allantoin. In Mus musculus (Mouse), this protein is Uricase (Uox).